Here is a 590-residue protein sequence, read N- to C-terminus: Sperm-associated microtubule inner protein 4 (590 aa).

Thr-219 bears the Phosphothreonine mark. A phosphoserine mark is found at Ser-407 and Ser-422. Lys-427 participates in a covalent cross-link: Glycyl lysine isopeptide (Lys-Gly) (interchain with G-Cter in SUMO2). The residue at position 442 (Tyr-442) is a Phosphotyrosine. Ser-485 is subject to Phosphoserine. A Glycyl lysine isopeptide (Lys-Gly) (interchain with G-Cter in SUMO2) cross-link involves residue Lys-545. Position 547 is a phosphoserine (Ser-547).

Predominantly expressed in the testes.

It localises to the cytoplasm. The protein localises to the cytoskeleton. Its subcellular location is the microtubule organizing center. It is found in the centrosome. The protein resides in the flagellum axoneme. Functionally, microtubule inner protein (MIP) part of the dynein-decorated doublet microtubules (DMTs) in flagellum axoneme. May serve to reinforce and thus stabilize the microtubule structure in the sperm flagella. In Homo sapiens (Human), this protein is Sperm-associated microtubule inner protein 4.